The following is a 651-amino-acid chain: Acetyl-coenzyme A synthetase (651 aa).

Residues 189–192, Thr-311, and Asn-335 each bind CoA; that span reads RGGK. Residues 387–389, 411–416, Asp-500, and Arg-515 each bind ATP; these read GEP and DTWWQT. Ser-523 serves as a coordination point for CoA. Arg-526 contributes to the ATP binding site. Val-537, His-539, and Val-542 together coordinate Mg(2+). Arg-586 lines the CoA pocket. Lys-611 carries the post-translational modification N6-acetyllysine.

The protein belongs to the ATP-dependent AMP-binding enzyme family. Mg(2+) is required as a cofactor. Post-translationally, acetylated. Deacetylation by the SIR2-homolog deacetylase activates the enzyme.

The enzyme catalyses acetate + ATP + CoA = acetyl-CoA + AMP + diphosphate. Its function is as follows. Catalyzes the conversion of acetate into acetyl-CoA (AcCoA), an essential intermediate at the junction of anabolic and catabolic pathways. AcsA undergoes a two-step reaction. In the first half reaction, AcsA combines acetate with ATP to form acetyl-adenylate (AcAMP) intermediate. In the second half reaction, it can then transfer the acetyl group from AcAMP to the sulfhydryl group of CoA, forming the product AcCoA. The chain is Acetyl-coenzyme A synthetase from Brucella melitensis biotype 1 (strain ATCC 23456 / CCUG 17765 / NCTC 10094 / 16M).